A 257-amino-acid chain; its full sequence is Snake venom serine proteinase 11 (257 aa).

Residues 1–18 (MVLIRVLANLLILQLSYA) form the signal peptide. The propeptide occupies 19–24 (QKSSEL). A Peptidase S1 domain is found at 25 to 248 (VVGGDECNIN…YTEWIQSIIT (224 aa)). 6 cysteine pairs are disulfide-bonded: Cys-31/Cys-162, Cys-49/Cys-65, Cys-97/Cys-255, Cys-141/Cys-209, Cys-173/Cys-188, and Cys-199/Cys-224. Residues His-64 and Asp-109 each act as charge relay system in the active site. A glycan (N-linked (GlcNAc...) asparagine) is linked at Asn-120. Residue Ser-203 is the Charge relay system of the active site.

The protein belongs to the peptidase S1 family. Snake venom subfamily. As to quaternary structure, monomer. As to expression, expressed by the venom gland.

The protein resides in the secreted. In terms of biological role, snake venom serine protease that may act in the hemostasis system of the prey. In Crotalus adamanteus (Eastern diamondback rattlesnake), this protein is Snake venom serine proteinase 11.